Reading from the N-terminus, the 331-residue chain is Ketol-acid reductoisomerase (NADP(+)) (331 aa).

A KARI N-terminal Rossmann domain is found at alanine 3–threonine 183. Residues tyrosine 26–glutamine 29, serine 52, and serine 54 contribute to the NADP(+) site. Histidine 109 is an active-site residue. Glycine 135 contributes to the NADP(+) binding site. The KARI C-terminal knotted domain maps to threonine 184 to leucine 329. Residues aspartate 192, glutamate 196, glutamate 228, and glutamate 232 each coordinate Mg(2+). Serine 253 contacts substrate.

This sequence belongs to the ketol-acid reductoisomerase family. Mg(2+) serves as cofactor.

It catalyses the reaction (2R)-2,3-dihydroxy-3-methylbutanoate + NADP(+) = (2S)-2-acetolactate + NADPH + H(+). It carries out the reaction (2R,3R)-2,3-dihydroxy-3-methylpentanoate + NADP(+) = (S)-2-ethyl-2-hydroxy-3-oxobutanoate + NADPH + H(+). It functions in the pathway amino-acid biosynthesis; L-isoleucine biosynthesis; L-isoleucine from 2-oxobutanoate: step 2/4. The protein operates within amino-acid biosynthesis; L-valine biosynthesis; L-valine from pyruvate: step 2/4. Its function is as follows. Involved in the biosynthesis of branched-chain amino acids (BCAA). Catalyzes an alkyl-migration followed by a ketol-acid reduction of (S)-2-acetolactate (S2AL) to yield (R)-2,3-dihydroxy-isovalerate. In the isomerase reaction, S2AL is rearranged via a Mg-dependent methyl migration to produce 3-hydroxy-3-methyl-2-ketobutyrate (HMKB). In the reductase reaction, this 2-ketoacid undergoes a metal-dependent reduction by NADPH to yield (R)-2,3-dihydroxy-isovalerate. The chain is Ketol-acid reductoisomerase (NADP(+)) from Thermobifida fusca (strain YX).